An 82-amino-acid chain; its full sequence is MWLKIQVFLLAITLITLGIQAEPNSSPNNPLIEEEARACAGLYKKCGKGASPCCEDRPCKCDLAMGNCICKKKFIEFFGGGK.

The first 21 residues, M1–A21, serve as a signal peptide directing secretion. A propeptide spanning residues E22–R37 is cleaved from the precursor. Cystine bridges form between C39–C54, C46–C59, C53–C70, and C61–C68. A propeptide spanning residues K72–K82 is cleaved from the precursor.

The protein belongs to the neurotoxin 02 (plectoxin) family. Expressed by the venom gland.

It is found in the secreted. Functionally, antagonist of L-type calcium channels (Cav1/CACNA1). Induces immediate clockwise gyration and flaccid paralysis after 6 hours at dose levels of 5 ug per mouse. This is Omega-ctenitoxin-Pn1a from Phoneutria nigriventer (Brazilian armed spider).